Consider the following 923-residue polypeptide: Serine/threonine-protein phosphatase 6 regulatory subunit 2 (923 aa).

Residue Ser289 is modified to Phosphoserine. Disordered regions lie at residues 409–441 (EASG…SPPE), 662–685 (VPGL…DSAG), and 743–766 (RCSS…PEKT). A compositionally biased stretch (polar residues) spans 430-441 (LETTPSITSPPE). Phosphoserine occurs at positions 746 and 796.

Belongs to the SAPS family. As to quaternary structure, protein phosphatase 6 (PP6) holoenzyme is proposed to be a heterotrimeric complex formed by the catalytic subunit, a SAPS domain-containing subunit (PP6R) and an ankyrin repeat-domain containing regulatory subunit (ARS). Interacts with PPP6C and NFKBIE. Interacts with ANKRD28. In terms of tissue distribution, strongest expression in bladder and lower levels found in heart and pancreas. Very weak expression observed in all other tissues tested.

The protein resides in the cytoplasm. Functionally, regulatory subunit of protein phosphatase 6 (PP6). May function as a scaffolding PP6 subunit. Involved in the PP6-mediated dephosphorylation of NFKBIE opposing its degradation in response to TNF-alpha. The chain is Serine/threonine-protein phosphatase 6 regulatory subunit 2 (Ppp6r2) from Mus musculus (Mouse).